The following is a 504-amino-acid chain: Cytochrome P450 monooxygenase braC (504 aa).

The helical transmembrane segment at 4–24 (LYLPTIWASTLTAATIFIVAV) threads the bilayer. Residue Cys-448 participates in heme binding.

The protein belongs to the cytochrome P450 family. Heme is required as a cofactor.

It is found in the membrane. It participates in secondary metabolite biosynthesis. Its function is as follows. Cytochrome P450 monooxygenase; part of the gene cluster that mediates the biosynthesis of the brasilane terpene glycosides brasilane D and E. The biosynthesis starts with the activity of the terpene cyclase braA that converts farnesyl pyrophosphate into the sesquiterpene alcohol trichobrasilenol. Subsequently, trichobrasilenol is glycosylated by the O-glycosyltransferase braB putatively using UDP-GlcNAc as sugar donor to yield brasilane A. The latter then undergoes two rounds of oxidation performed by the cytochrome P450 monooxygenase braC. In the first round braC hydroxylates C-12 forming brasilane D, which serves as substrate in the second round to establish the epoxide at the bond between C-5 and C-10 and oxidize the alcohol at C-12 to an aldehyde leading to the final product brasilane E. The protein is Cytochrome P450 monooxygenase braC of Annulohypoxylon truncatum (Hypoxylon truncatum).